The primary structure comprises 427 residues: Glutamate-1-semialdehyde 2,1-aminomutase (427 aa).

Lys-265 is subject to N6-(pyridoxal phosphate)lysine.

The protein belongs to the class-III pyridoxal-phosphate-dependent aminotransferase family. HemL subfamily. In terms of assembly, homodimer. Requires pyridoxal 5'-phosphate as cofactor.

The protein resides in the cytoplasm. The catalysed reaction is (S)-4-amino-5-oxopentanoate = 5-aminolevulinate. It functions in the pathway porphyrin-containing compound metabolism; protoporphyrin-IX biosynthesis; 5-aminolevulinate from L-glutamyl-tRNA(Glu): step 2/2. The sequence is that of Glutamate-1-semialdehyde 2,1-aminomutase from Pseudomonas fluorescens (strain SBW25).